Reading from the N-terminus, the 802-residue chain is MRLLLALLGVLLSVPGPPVLSLEASEEVELEPCLAPSLEQQEQELTVALGQPVRLCCGRAERGGHWYKEGSRLAPAGRVRGWRGRLEIASFLPEDAGRYLCLARGSMIVLQNLTLITGDSLTSSNDDEDPKSHRDPSNRHSYPQQAPYWTHPQRMEKKLHAVPAGNTVKFRCPAAGNPTPTIRWLKDGQAFHGENRIGGIRLRHQHWSLVMESVVPSDRGTYTCLVENAVGSIRYNYLLDVLERSPHRPILQAGLPANTTAVVGSDVELLCKVYSDAQPHIQWLKHIVINGSSFGADGFPYVQVLKTADINSSEVEVLYLRNVSAEDAGEYTCLAGNSIGLSYQSAWLTVLPEEDPTWTAAAPEARYTDIILYASGSLALAVLLLLAGLYRGQALHGRHPRPPATVQKLSRFPLARQFSLESGSSGKSSSSLVRGVRLSSSGPALLAGLVSLDLPLDPLWEFPRDRLVLGKPLGEGCFGQVVRAEAFGMDPARPDQASTVAVKMLKDNASDKDLADLVSEMEVMKLIGRHKNIINLLGVCTQEGPLYVIVECAAKGNLREFLRARRPPGPDLSPDGPRSSEGPLSFPVLVSCAYQVARGMQYLESRKCIHRDLAARNVLVTEDNVMKIADFGLARGVHHIDYYKKTSNGRLPVKWMAPEALFDRVYTHQSDVWSFGILLWEIFTLGGSPYPGIPVEELFSLLREGHRMDRPPHCPPELYGLMRECWHAAPSQRPTFKQLVEALDKVLLAVSEEYLDLRLTFGPYSPSGGDASSTCSSSDSVFSHDPLPLGSSSFPFGSGVQT.

Residues 1-21 (MRLLLALLGVLLSVPGPPVLS) form the signal peptide. Residues 22-118 (LEASEEVELE…VLQNLTLITG (97 aa)) form the Ig-like C2-type 1 domain. The Extracellular segment spans residues 22–369 (LEASEEVELE…AAAPEARYTD (348 aa)). An intrachain disulfide couples Cys-57 to Cys-101. Residue Asn-112 is glycosylated (N-linked (GlcNAc...) asparagine). Residues 119–148 (DSLTSSNDDEDPKSHRDPSNRHSYPQQAPY) are disordered. Ig-like C2-type domains follow at residues 152-240 (PQRM…YLLD) and 249-349 (PILQ…AWLT). An intrachain disulfide couples Cys-172 to Cys-224. N-linked (GlcNAc...) asparagine glycosylation is found at Asn-258, Asn-290, Asn-311, and Asn-322. Residues Cys-271 and Cys-333 are joined by a disulfide bond. A helical membrane pass occupies residues 370–390 (IILYASGSLALAVLLLLAGLY). Tyr-390 is modified (phosphotyrosine; in variant R-388). Topologically, residues 391–802 (RGQALHGRHP…SFPFGSGVQT (412 aa)) are cytoplasmic. Positions 467-755 (LVLGKPLGEG…VLLAVSEEYL (289 aa)) constitute a Protein kinase domain. ATP contacts are provided by residues 473 to 481 (LGEGCFGQV) and Lys-503. Position 573 is a phosphoserine (Ser-573). Asp-612 (proton acceptor) is an active-site residue. Phosphotyrosine; by autocatalysis is present on residues Tyr-642, Tyr-643, and Tyr-754.

It belongs to the protein kinase superfamily. Tyr protein kinase family. Fibroblast growth factor receptor subfamily. As to quaternary structure, monomer. Homodimer after ligand binding. Interacts with FGF1, FGF2, FGF4, FGF6, FGF8, FGF9, FGF16, FGF17, FGF18, FGF19, FGF21 and FGF23 (in vitro). Binding affinity for FGF family members is enhanced by interactions between FGFs and heparan sulfate proteoglycans. Interacts with KLB; this strongly increases the affinity for FGF19 and FGF23. Affinity for FGF19 is strongly increased by KLB and sulfated glycosaminoglycans. KLB and KL both interact with the core-glycosylated FGFR4 in the endoplasmic reticulum and promote its degradation, so that only FGFR4 with fully mature N-glycans is expressed at the cell surface. Identified in a complex with NCAM1, CDH2, PLCG1, FRS2, SRC, SHC1, GAP43 and CTTN. Interacts with MMP14 and HIP1. Interacts with STAT3. N-glycosylated. Full maturation of the glycan chains in the Golgi is essential for high affinity interaction with FGF19. In terms of processing, ubiquitinated. Subject to proteasomal degradation when not fully glycosylated. Post-translationally, autophosphorylated. Binding of FGF family members together with heparan sulfate proteoglycan or heparin promotes receptor dimerization and autophosphorylation on tyrosine residues. Autophosphorylation occurs in trans between the two FGFR molecules present in the dimer. Expressed in gastrointestinal epithelial cells, pancreas, and gastric and pancreatic cancer cell lines.

It localises to the cell membrane. The protein resides in the endosome. It is found in the endoplasmic reticulum. Its subcellular location is the secreted. The catalysed reaction is L-tyrosyl-[protein] + ATP = O-phospho-L-tyrosyl-[protein] + ADP + H(+). With respect to regulation, present in an inactive conformation in the absence of bound ligand. Ligand binding leads to dimerization and activation by autophosphorylation on tyrosine residues. Its function is as follows. Tyrosine-protein kinase that acts as a cell-surface receptor for fibroblast growth factors and plays a role in the regulation of cell proliferation, differentiation and migration, and in regulation of lipid metabolism, bile acid biosynthesis, glucose uptake, vitamin D metabolism and phosphate homeostasis. Required for normal down-regulation of the expression of CYP7A1, the rate-limiting enzyme in bile acid synthesis, in response to FGF19. Phosphorylates PLCG1 and FRS2. Ligand binding leads to the activation of several signaling cascades. Activation of PLCG1 leads to the production of the cellular signaling molecules diacylglycerol and inositol 1,4,5-trisphosphate. Phosphorylation of FRS2 triggers recruitment of GRB2, GAB1, PIK3R1 and SOS1, and mediates activation of RAS, MAPK1/ERK2, MAPK3/ERK1 and the MAP kinase signaling pathway, as well as of the AKT1 signaling pathway. Promotes SRC-dependent phosphorylation of the matrix protease MMP14 and its lysosomal degradation. FGFR4 signaling is down-regulated by receptor internalization and degradation; MMP14 promotes internalization and degradation of FGFR4. Mutations that lead to constitutive kinase activation or impair normal FGFR4 inactivation lead to aberrant signaling. This is Fibroblast growth factor receptor 4 (FGFR4) from Homo sapiens (Human).